Reading from the N-terminus, the 501-residue chain is Aspartate--tRNA ligase, cytoplasmic (501 aa).

A Phosphothreonine modification is found at Thr-52. Lys-74 carries the N6-acetyllysine modification. L-aspartate is bound at residue Glu-229. Ser-249 is subject to Phosphoserine. Residues 251 to 254 (QLYK) are aspartate. Arg-273 provides a ligand contact to L-aspartate. Residues 273-275 (RAE) and 281-283 (RHL) contribute to the ATP site. Position 374 is an N6-acetyllysine (Lys-374). Glu-424 is an ATP binding site. L-aspartate is bound by residues Ser-427 and Arg-431. 472 to 475 (GLER) contacts ATP.

This sequence belongs to the class-II aminoacyl-tRNA synthetase family. Type 2 subfamily. Homodimer. Part of a multisubunit complex that groups tRNA ligases for Arg (RARS1), Asp (DARS1), Gln (QARS1), Ile (IARS1), Leu (LARS1), Lys (KARS1), Met (MARS1) the bifunctional ligase for Glu and Pro (EPRS1) and the auxiliary subunits AIMP1/p43, AIMP2/p38 and EEF1E1/p18.

It is found in the cytoplasm. It catalyses the reaction tRNA(Asp) + L-aspartate + ATP = L-aspartyl-tRNA(Asp) + AMP + diphosphate. Catalyzes the specific attachment of an amino acid to its cognate tRNA in a 2 step reaction: the amino acid (AA) is first activated by ATP to form AA-AMP and then transferred to the acceptor end of the tRNA. The chain is Aspartate--tRNA ligase, cytoplasmic (Dars1) from Rattus norvegicus (Rat).